A 534-amino-acid polypeptide reads, in one-letter code: Serine protease vicPb (534 aa).

The N-terminal stretch at 1–17 (MLRYLLIPILYLQVVLG) is a signal peptide. N-linked (GlcNAc...) asparagine glycosylation is found at Asn34, Asn65, and Asn126. The active-site Charge relay system is Ser174. 5 N-linked (GlcNAc...) asparagine glycosylation sites follow: Asn297, Asn335, Asn352, Asn415, and Asn437. Catalysis depends on Asp451, which acts as the Charge relay system.

The protein belongs to the peptidase S28 family.

The protein operates within mycotoxin biosynthesis. Functionally, serine protease, part of the gene cluster that mediates the biosynthesis of the secondary metabolite victorin, the molecular basis for Victoria blight of oats. Within the pathway, vicPa and vicPb are probably involved in the processing of the vicA1 and vicA2 precursors. The pathway starts with the processing of the precursor vicA1 by several endopeptidases including kexin proteases as well as the cluster-specific S28 family peptidases vicPa and vicPb to produce 7 identical copies of the hexapeptide Gly-Leu-Lys-Leu-Ala-Phe. After being excised from the precursor peptide, the core peptides are cyclized and modified post-translationally by enzymes encoded within the gene cluster. The ustYa family oxidase vicYb is required for the formation of the macrocycle in victorin and the copper amine oxidases (CAOs) vicK1 and vicK2 are responsible for converting victorin to the active form by oxidizing the N-terminal glycyl residue in the peptides to glyoxylate. Relaxed substrate specificity of enzymes in the victorin biosynthetic pathway results in a metabolic grid that produces a set of analogs including victorinines B, C, E or HV-toxin M. The protein is Serine protease vicPb of Bipolaris victoriae (strain FI3) (Victoria blight of oats agent).